Consider the following 423-residue polypeptide: Gamma-glutamyl phosphate reductase (423 aa).

It belongs to the gamma-glutamyl phosphate reductase family.

It is found in the cytoplasm. It carries out the reaction L-glutamate 5-semialdehyde + phosphate + NADP(+) = L-glutamyl 5-phosphate + NADPH + H(+). It functions in the pathway amino-acid biosynthesis; L-proline biosynthesis; L-glutamate 5-semialdehyde from L-glutamate: step 2/2. Functionally, catalyzes the NADPH-dependent reduction of L-glutamate 5-phosphate into L-glutamate 5-semialdehyde and phosphate. The product spontaneously undergoes cyclization to form 1-pyrroline-5-carboxylate. In Roseiflexus castenholzii (strain DSM 13941 / HLO8), this protein is Gamma-glutamyl phosphate reductase.